Consider the following 267-residue polypeptide: Ribosyldihydronicotinamide dehydrogenase-like protein traD (267 aa).

Residues His-9, 15–16 (LN), and 100–103 (LWWF) each bind FAD. Residue 122–124 (GHG) coordinates substrate. FAD contacts are provided by residues 152–155 (TLGG) and Tyr-160.

It belongs to the NAD(P)H dehydrogenase (quinone) family. Homodimer. The cofactor is FAD.

Its pathway is secondary metabolite biosynthesis. Functionally, ribosyldihydronicotinamide dehydrogenase-like protein; part of the tra gene cluster that produces terrestric acid. The clavatol biosynthesis cluster cla and the terrestric acid cluster tra are both involved in the production of peniphenones and penilactones. The non-reducing PKS claF is responsible for the formation of clavatol from successive condensations of 3 malonyl-CoA units, presumably with a simple acetyl-CoA starter unit, and 2 methylation steps. The esterase claE probably collaborates with claF by catalyzing the hydrolysis of ACP-bound acyl intermediates to free the ACP from stalled intermediates. The clavatol oxidase claD then converts clavatol to hydroxyclavatol. Spontaneous dehydration of hydroxyclavatol leads to the accumulation of the highly active ortho-quinone methide. On the other hand, the PKS-NRPS hybrid traA is involved in the formation of crustosic acid, with the help of traB and traD. The polyketide synthase module (PKS) of traA is responsible for the synthesis of the polyketide backbone via the condensation of an acetyl-CoA starter unit with 3 malonyl-CoA units. The downstream nonribosomal peptide synthetase (NRPS) module then amidates the carboxyl end of the polyketide with L-malic acid. Because traA lacks a designated enoylreductase (ER) domain, the required activity is provided the enoyl reductase traG. Crustosic acid undergoes decarboxylation and isomerization to the terrestric acid, catalyzed by the 2-oxoglutarate-dependent dioxygenase traH. Both acids are further converted to the 2 gamma-butyrolactones (R)-5-methyltetronic acid and (S)-5-carboxylmethyltetronic acid, with involvement of the cytochrome P450 monooxygenase claJ. Spontaneous addition of the methide to these gamma-butyrolactones leads to peniphenone D and penilactone D, which undergo again stereospecific attacking by methide to give penilactones A and B. The polypeptide is Ribosyldihydronicotinamide dehydrogenase-like protein traD (Penicillium crustosum (Blue mold fungus)).